Here is a 197-residue protein sequence, read N- to C-terminus: Beta-crystallin A2 (197 aa).

An N-terminal arm region spans residues methionine 1–proline 11. Beta/gamma crystallin 'Greek key' domains follow at residues alanine 12 to asparagine 52 and glycine 53 to leucine 99. The segment at cysteine 100–aspartate 105 is connecting peptide. Beta/gamma crystallin 'Greek key' domains are found at residues serine 106–serine 147 and glycine 148–glutamine 196.

The protein belongs to the beta/gamma-crystallin family. Homo/heterodimer, or complexes of higher-order. The structure of beta-crystallin oligomers seems to be stabilized through interactions between the N-terminal arms.

Functionally, crystallins are the dominant structural components of the vertebrate eye lens. The protein is Beta-crystallin A2 (CRYBA2) of Oryctolagus cuniculus (Rabbit).